Reading from the N-terminus, the 236-residue chain is Small ribosomal subunit protein uS2c (236 aa).

This sequence belongs to the universal ribosomal protein uS2 family.

It is found in the plastid. The protein localises to the chloroplast. In Vitis vinifera (Grape), this protein is Small ribosomal subunit protein uS2c (rps2).